A 112-amino-acid chain; its full sequence is Transmembrane protein 14C (112 aa).

The next 4 helical transmembrane spans lie at Val-7–Ile-27, Ala-32–Ala-52, Val-62–His-82, and Pro-88–Phe-108.

The protein belongs to the TMEM14 family.

It is found in the mitochondrion membrane. In terms of biological role, required for normal heme biosynthesis. The protein is Transmembrane protein 14C (TMEM14C) of Homo sapiens (Human).